The chain runs to 414 residues: Meiotic driver wtf19 (414 aa).

Residues 1–94 (MKNKYYPVRT…RENHSSGTAD (94 aa)) are disordered. A compositionally biased stretch (basic and acidic residues) spans 11–29 (SMDEMNAKNDNEIDLEKGP). The segment covering 57–72 (GANNPNLFNTDESTTP) has biased composition (polar residues). 9 helical membrane-spanning segments follow: residues 99 to 119 (FLIK…PAVC), 136 to 156 (WVYF…LWCF), 170 to 190 (VTVI…AQCV), 192 to 212 (VTAI…AQCV), 222 to 242 (CVKV…IGLF), 247 to 267 (EMMI…FGCV), 284 to 304 (TISA…WTLW), 311 to 331 (LQVL…MSLF), and 339 to 359 (GYEI…LYEM).

Belongs to the WTF family. In terms of assembly, homomer. Forms protein aggregates. The two isoforms can interact with each other and with themselves. High sequence similarity is required for their interaction.

The protein localises to the spore membrane. It localises to the vacuole membrane. Its subcellular location is the ascus epiplasm. The protein resides in the cytoplasm. It is found in the endoplasmic reticulum membrane. Its function is as follows. Promotes unequal transmission of alleles from the parental zygote to progeny spores by acting as poison/antidote system where the poison and antidote proteins are produced from the same locus; the poison component is trans-acting and targets all spores within an ascus whereas the antidote component is spore-specific, leading to poisoning of all progeny that do not inherit the allele. In terms of biological role, localizes isoform 2 to the vacuole thereby facilitating its degradation. Forms toxic aggregates that disrupt spore maturation. The chain is Meiotic driver wtf19 from Schizosaccharomyces kambucha (Fission yeast).